We begin with the raw amino-acid sequence, 375 residues long: OVARIAN TUMOR DOMAIN-containing deubiquitinating enzyme 7 (375 aa).

Positions 1–18 are enriched in basic residues; sequence MAKTKQQKSKPKKQPHQK. The interval 1–23 is disordered; that stretch reads MAKTKQQKSKPKKQPHQKQGKDC. Residues 37-161 form the OTU domain; that stretch reads LKIIQVTADG…GEHYNSVRSK (125 aa). The active site involves Asp45. Cys48 acts as the Nucleophile in catalysis. His154 is a catalytic residue. In terms of domain architecture, UBA-like spans 202-250; that stretch reads HVNAGAIKVVMSGSCCDNTEKAEQVLLQVNGDVDAAIEFLIADQGMESL. 2 stretches are compositionally biased toward polar residues: residues 251–264 and 290–305; these read TEND…SDTI and ASGN…CTTQ. Positions 251–306 are disordered; that stretch reads TENDTETASASDTINPKHASDSPMENTEQAREELIEEESASGNNSETVQAKCTTQT. The Nuclear localization signal signature appears at 308–315; that stretch reads DKKIPRNK.

The protein belongs to the peptidase C85 family.

It localises to the nucleus. It catalyses the reaction Thiol-dependent hydrolysis of ester, thioester, amide, peptide and isopeptide bonds formed by the C-terminal Gly of ubiquitin (a 76-residue protein attached to proteins as an intracellular targeting signal).. Its function is as follows. Hydrolase that can remove conjugated ubiquitin from proteins in vitro and may therefore play an important regulatory role at the level of protein turnover by preventing degradation. Cysteine protease with a preference for 'Lys-63' over 'Lys-48' over 'Met-1' -linked ubiquitin (UB) tetramers as substrates. Also cleaves RUB-GST fusion. This chain is OVARIAN TUMOR DOMAIN-containing deubiquitinating enzyme 7, found in Arabidopsis thaliana (Mouse-ear cress).